The sequence spans 985 residues: MAAESNDSQKAMNLGPTLRDEPPSTEEIEQRQRKASTSSSEDGEHEDNDRRRVVGSPGSRDGSPRVGSPVARASPRAKRDQKSSDSDSDSSDSDDGVMRKIRSSVMHIRRTSDEETKNRERSSSPDRHEKKSKSRSRSRSRSRSRSRSRSPRERYRRARRSRERERDRYGDRERYERRSSRERDWEHRRRGRSASPDKNDKPPTEEPPVKKRKETLDPILTRTGGAYIPPAKLRMMQAQITDKSSLEYQRMSWEALKKSINGLINKVNVSNIANIIQELLQENIVRGRGLLARSILQAQAASPIFTHVYSAVVAIINSKFPQIGELILKRLILNFRKGYRRNDKQQCLTASKFVGHLINQNVAHEVLCLEMLTLLLERPTDDSVEVAISFLKECGLKLTEVSPRGINAIFERLRNILHESEIDKRVQYMIEVMFAIRKDGFKDHPIIPEGLDLVEEEDQFTHMLPLEDEYNTEDILNVFKLDPNFLENEEKYKTIKREILDEGSSDSGDDAGGSGDDEDDDEEDEEAAAGEEQEKVTIFDQTEVNLVAFRRTIYLAIQSSLDFEECAHKLIKMDFPESQTKELCNMILDCCAQQRTYEKFFGLLAGRFCLLKKEYMESFEAIFQEQYETIHRLETNKLRNVARIFAHLLYTDSVPWSVLECVRMSEDTTTSSSRIFVKILFQELCAYMGLPKLNERLKDTTLQPFFEGLFPRDNPRNTRFAINFFTSIGLGGLTDELREHLKNAPKMIMTQNQEVESSDSSSSSSSSSDSSSSSGSSSESDSSESDSDSSSDSDSSSSSGSSSDSDSRRKKASGKKKDKSKSKKSSKAANQRSPLEERPTKRHENRRQDASKEDRRGSDKHNRDPQRRGQQDESPPARPRGEPERIRGQKEPHRHAQDHQDRPTDSGRHKDDGKNSRVNKDKDRRRSREKEPLRRSRDRSKSRERSRKEMDSRDSYGNGLERADKENRHSDRYKESRRKDDRRHR.

Over residues 1 to 11 (MAAESNDSQKA) the composition is skewed to polar residues. Residues 1–225 (MAAESNDSQK…LDPILTRTGG (225 aa)) form a disordered region. Residues 18–32 (LRDEPPSTEEIEQRQ) are compositionally biased toward basic and acidic residues. Acidic residues predominate over residues 86–95 (SDSDSSDSDD). Basic and acidic residues predominate over residues 110 to 129 (RTSDEETKNRERSSSPDRHE). Positions 130 to 161 (KKSKSRSRSRSRSRSRSRSRSPRERYRRARRS) are enriched in basic residues. Basic and acidic residues-rich tracts occupy residues 162-187 (RERE…DWEH) and 195-209 (SPDK…EPPV). In terms of domain architecture, MIF4G spans 257–440 (KKSINGLINK…EVMFAIRKDG (184 aa)). Residues 497–534 (REILDEGSSDSGDDAGGSGDDEDDDEEDEEAAAGEEQE) are disordered. The span at 501 to 531 (DEGSSDSGDDAGGSGDDEDDDEEDEEAAAGE) shows a compositional bias: acidic residues. The MI domain occupies 548–664 (AFRRTIYLAI…PWSVLECVRM (117 aa)). The interval 752–985 (NQEVESSDSS…SRRKDDRRHR (234 aa)) is disordered. Residues 758 to 780 (SDSSSSSSSSSDSSSSSGSSSES) show a composition bias toward low complexity. Over residues 781 to 791 (DSSESDSDSSS) the composition is skewed to acidic residues. Low complexity predominate over residues 792–804 (DSDSSSSSGSSSD). The segment covering 808–826 (RRKKASGKKKDKSKSKKSS) has biased composition (basic residues). 3 stretches are compositionally biased toward basic and acidic residues: residues 846–871 (RRQD…RGQQ), 879–954 (PRGE…DSRD), and 961–979 (ERAD…SRRK).

It belongs to the CWC22 family. In terms of assembly, component of the pre-catalytic spliceosome B and the catalytic spliceosome C complexes. Component of the minor spliceosome, which splices U12-type introns.

It is found in the nucleus. It localises to the nucleus speckle. Functionally, required for pre-mRNA splicing as component of the spliceosome. Promotes exon-junction complex (EJC) assembly. The sequence is that of Pre-mRNA-splicing factor CWC22 homolog (cwc22) from Danio rerio (Zebrafish).